The primary structure comprises 411 residues: Adenylosuccinate synthetase (411 aa).

Residues 11 to 17 and 39 to 41 contribute to the GTP site; these read GDEGKGK and GHT. Aspartate 12 acts as the Proton acceptor in catalysis. Mg(2+)-binding residues include aspartate 12 and glycine 39. Residues 12-15, 37-40, threonine 121, arginine 135, glutamine 215, threonine 230, and arginine 294 contribute to the IMP site; these read DEGK and NAGH. Histidine 40 functions as the Proton donor in the catalytic mechanism. Residue 290–296 participates in substrate binding; sequence TTTKRPR. Residues arginine 296, 322–324, and 400–402 each bind GTP; these read KLD and STS.

This sequence belongs to the adenylosuccinate synthetase family. Homodimer. The cofactor is Mg(2+).

It is found in the cytoplasm. It carries out the reaction IMP + L-aspartate + GTP = N(6)-(1,2-dicarboxyethyl)-AMP + GDP + phosphate + 2 H(+). It participates in purine metabolism; AMP biosynthesis via de novo pathway; AMP from IMP: step 1/2. Its function is as follows. Plays an important role in the de novo pathway of purine nucleotide biosynthesis. Catalyzes the first committed step in the biosynthesis of AMP from IMP. This is Adenylosuccinate synthetase from Helicobacter pylori (strain ATCC 700392 / 26695) (Campylobacter pylori).